Reading from the N-terminus, the 147-residue chain is Bis(5'-nucleosyl)-tetraphosphatase [asymmetrical] (147 aa).

Position 2 is an N-acetylalanine (alanine 2). The 138-residue stretch at alanine 2–histidine 139 folds into the Nudix hydrolase domain. The short motif at glycine 43 to glycine 64 is the Nudix box element.

This sequence belongs to the Nudix hydrolase family. Requires a divalent metal cation as cofactor.

It catalyses the reaction P(1),P(4)-bis(5'-guanosyl) tetraphosphate + H2O = GMP + GTP + 2 H(+). It carries out the reaction a 5'-end CoA-ribonucleoside in mRNA + H2O = a 5'-end phospho-adenosine-phospho-ribonucleoside in mRNA + (R)-4'-phosphopantetheine + 2 H(+). The catalysed reaction is a 5'-end FAD-phospho-ribonucleoside in mRNA + H2O = a 5'-end phospho-adenosine-phospho-ribonucleoside in mRNA + FMN + 2 H(+). With respect to regulation, inhibited by fluoride ions. Functionally, catalyzes the asymmetric hydrolysis of diadenosine 5',5'''-P1,P4-tetraphosphate (Ap4A) to yield AMP and ATP. Exhibits decapping activity towards FAD-capped RNAs and dpCoA-capped RNAs in vitro. This is Bis(5'-nucleosyl)-tetraphosphatase [asymmetrical] (NUDT2) from Sus scrofa (Pig).